The following is a 2211-amino-acid chain: MAMALAVGAPSEQRGNLPYNTLKDGPTVDSMKATTDGKNGQGESAFWDTCVHTVFREHCQRAPNSPAVNAWDGSFTYAELDSLSDAIASVLILSGVGPESIIPIYMQKSRWTTVAILGVLKSGGAFTLLDPSHPRSRVEEISKEIQARFILTSEKLSKQCLEMFSVLVVEHLSRACLPSPGQAGHTRSRPENAAYIAFTSGSTGKPKGIVIEHRSYCSGARSHLKVFGIDSTSRVLQFASYAFDVSIMETLSTLMAGGCLCVMSESERSDPNLFVVSYKNLRISHCFMTPSFARTVPWTECCNPPPTLIVGGELMRPSDARAYKEMGIRCMNAYGPAECSVNVSVQSRVEAAVDPRNIGYTTGATAWIISPENPEELMPTGTVGELLVEGPIVGRGYLNDPKATRQAFIDTPAWLRRHRKGTSYQHRVYRTGDLASLDSITGALLLHGRKDAQVKIRGQRVELPDIEHHLQLTLPNDNAEVIVEKVTFSDDGSEKLIAFVLVRPSNTDSVIGNTGDRLFLAPQSQIMEQFAISKKHLQTHLPSYMVPDIFIPISTLPQTASGKTDRKALRTRAAALSRRDVQCFLLSPAGGKRPPSTPKEATIRSLYSNVLNLPIDLIGMDDTFLRLGGDSLQAIRLVAAARAAGLILQAKDILSSQSTLAEQSKRAGLIQTIDRTWESSPPFALLHGPTRHAIVDLAQKQCRVPSNLIEDIYPCTALQEGMFITSLKHPGMYTGQIIFDIPDRMELPRLRAAWLSVVSENAALRTRIIETHEGLMQAVIVDDFVWEEETDEMLLSSDGEALEITKIGVPLVRFRYRPRHRQLMMTIHHSIWDGWSLRLVHEQLHRAYIGRDLLPSTSYRSFIQYTQELQGADEFWASELAGVNAPIFPTLPSGNYRPRVNASHRHVVRNLASTGKEEHTAATYIHLAWSLLVAHYTDADETVYGVTVNGRSADVPGVENIVGPTIATVPTRIRVNEEDTVEMALDHVQDALARMIPYEQAGLQRISRCSRDASEACRFQTLLIIEAPTDSDVDCEKNEAGNFSIIGGTTQTGMDYTAFSSYAMMLVFRTSANKSAISFDITYDAQVIGHDEVERMAHQFEHVLRHIYTLATGRIGDISFIGPRDIEQVQQWNSSMPPADNRFLQELIFAQCSRRPQASAIISWDGSWTYRELWAHSSFFARQLQRYGVTRGTPVAVCLDRSRWSIAVILGVLLARGTCVLIDLLAPRQRVRDILQIAGTGILVHSHATATLTSGLCPTVVNVSFLAAQSDSSQPEFPFTLETWGGTPEDLAFIIFTSGSTGHPKGIEMPHRTLSTSISHHSAGMRVTSSSRVLHFSSYAFDVSIYEIFTTLAAGGTICVPSEFDRMNNLAGFIQDTQVNWAFLTPSTARSLNPADVPLLTTLVLGGEAVTHESVEVWAKGRSLINGYGPAEATICGVGNIPEAGWKSGVVGRIIGGLGWVTVPSDPNRLAAVGAVGELLLEGPFLARGYLNLPEVTKAAFIDPPSWRTRIPAPSPYSFLYRTGDLVRYQPDGSIQYVGRKDSRVKLRGQLVDLGAVEASVMRVYPAAGQVVADVLVSENTARLIAMVKLGPSVTENHDGPMFAAPDLVFNEAAASIQARLRAIVPAYMVPSMFIPLRHIPRTLTGKTDRRRLRDKILSLSHSDLQRYMMSSSTKTPMSDDNERRLQEIWAEVLQLPCEAIGREDSFLSLGGESLATMKMVALARRVGFMFAVTDVMNNTSLSTLARSRHLITEQAILTSSPSLSLPTIEGESLQEILRPLLNAGHIQGGNDIAAIHPVTAAQAFLVQRYPWSHFQFDLSGAVSPSKLQTACTALMARFTILRTVFVEHAGCLLQLVLREVPNRVHEITTNEPLDDFCNSVCQQQQDVCVVNSTTLPTLFTLVSNRQLNRHRLLLRLAHAQYDLTTIPLIVQSLADEYNRTLRSGFSADFGYYLSHHKRQNNDDRSHNFWKRYLSGSSMMSTNQTADPTTVQERVFHVTGSCIIIPTSHPPDITIATAVKAAVCLVLAARTGCTDIVIGQTVDARCSSADSTLDQIVGPCTNYIPYRLSVCCSKTALEYLRSAQAQHTTCLRYSSLDFDQIVAKCTSWPSSTQFGYIVQHQDTGAELALTLGGDTTSLPMTSYGRVFPQGEVWIGSTPCSTGLRIDVIALSAVLSQKDAQTMAEEVGAALEKLLGCGYRRLSHLIGNTFAT.

The adenylation 1 stretch occupies residues 76 to 475 (TYAELDSLSD…IEHHLQLTLP (400 aa)). A Carrier 1 domain is found at 594–671 (PPSTPKEATI…EQSKRAGLIQ (78 aa)). Serine 631 is subject to O-(pantetheine 4'-phosphoryl)serine. A condensation 1 region spans residues 710-975 (EDIYPCTALQ…IATVPTRIRV (266 aa)). The segment at 1169–1563 (TYRELWAHSS…LGAVEASVMR (395 aa)) is adenylation 2. Residues 1677–1756 (PMSDDNERRL…RSRHLITEQA (80 aa)) form the Carrier 2 domain. Position 1714 is an O-(pantetheine 4'-phosphoryl)serine (serine 1714). The condensation 2 stretch occupies residues 1814–2069 (HFQFDLSGAV…CTNYIPYRLS (256 aa)).

This sequence belongs to the NRP synthetase family.

It carries out the reaction L-proline + L-tryptophan + 2 ATP = brevianamide F + 2 AMP + 2 diphosphate + 2 H(+). Its pathway is mycotoxin biosynthesis. Functionally, nonribosomal peptide synthetase; part of the gene cluster that mediates the biosynthesis of fumitremorgins, indole alkaloids that carry not only intriguing chemical structures, but also interesting biological and pharmacological activities. The biosynthesis of fumitremorgin-type alkaloids begins by condensation of the two amino acids L-tryptophan and L-proline to brevianamide F, catalyzed by the non-ribosomal peptide synthetase ftmA. Brevianamide F is then prenylated by the prenyltransferase ftmPT1/ftmB in the presence of dimethylallyl diphosphate, resulting in the formation of tryprostatin B. The three cytochrome P450 monooxygenases, ftmP450-1/ftmC, ftmP450-2/ftmE and ftmP450-3/FtmG, are responsible for the conversion of tryprostatin B to 6-hydroxytryprostatin B, tryprostatin A to fumitremorgin C and fumitremorgin C to 12,13-dihydroxyfumitremorgin C, respectively. The putative methyltransferase ftmMT/ftmD is expected for the conversion of 6-hydroxytryprostatin B to tryprostatin A. FtmPT2/FtmH catalyzes the prenylation of 12,13-dihydroxyfumitre-morgin C in the presence of dimethylallyl diphosphate, resulting in the formation of fumitremorgin B. Fumitremorgin B is further converted to verruculogen by ftmOx1/ftmF via the insertion of an endoperoxide bond between the two prenyl moieties. In some fungal species, verruculogen is further converted to fumitremorgin A, but the enzymes involved in this step have not been identified yet. In Aspergillus fumigatus (strain ATCC MYA-4609 / CBS 101355 / FGSC A1100 / Af293) (Neosartorya fumigata), this protein is Nonribosomal peptide synthetase 13.